Reading from the N-terminus, the 343-residue chain is Holliday junction branch migration complex subunit RuvB (343 aa).

The segment at 1–181 is large ATPase domain (RuvB-L); it reads MDRIVEIEKV…FGMQFRLQFY (181 aa). Residues Leu20, Arg21, Gly62, Lys65, Thr66, Thr67, 128 to 130, Arg171, Tyr181, and Arg218 contribute to the ATP site; that span reads EDF. Position 66 (Thr66) interacts with Mg(2+). Positions 182–252 are small ATPAse domain (RuvB-S); the sequence is TDNELARIIS…RAKSSLDSLG (71 aa). Residues 255 to 343 are head domain (RuvB-H); that stretch reads DLGFDEMDLK…EKQNKGLFNE (89 aa). Arg308 and Arg313 together coordinate DNA.

This sequence belongs to the RuvB family. As to quaternary structure, homohexamer. Forms an RuvA(8)-RuvB(12)-Holliday junction (HJ) complex. HJ DNA is sandwiched between 2 RuvA tetramers; dsDNA enters through RuvA and exits via RuvB. An RuvB hexamer assembles on each DNA strand where it exits the tetramer. Each RuvB hexamer is contacted by two RuvA subunits (via domain III) on 2 adjacent RuvB subunits; this complex drives branch migration. In the full resolvosome a probable DNA-RuvA(4)-RuvB(12)-RuvC(2) complex forms which resolves the HJ.

The protein resides in the cytoplasm. It catalyses the reaction ATP + H2O = ADP + phosphate + H(+). Its function is as follows. The RuvA-RuvB-RuvC complex processes Holliday junction (HJ) DNA during genetic recombination and DNA repair, while the RuvA-RuvB complex plays an important role in the rescue of blocked DNA replication forks via replication fork reversal (RFR). RuvA specifically binds to HJ cruciform DNA, conferring on it an open structure. The RuvB hexamer acts as an ATP-dependent pump, pulling dsDNA into and through the RuvAB complex. RuvB forms 2 homohexamers on either side of HJ DNA bound by 1 or 2 RuvA tetramers; 4 subunits per hexamer contact DNA at a time. Coordinated motions by a converter formed by DNA-disengaged RuvB subunits stimulates ATP hydrolysis and nucleotide exchange. Immobilization of the converter enables RuvB to convert the ATP-contained energy into a lever motion, pulling 2 nucleotides of DNA out of the RuvA tetramer per ATP hydrolyzed, thus driving DNA branch migration. The RuvB motors rotate together with the DNA substrate, which together with the progressing nucleotide cycle form the mechanistic basis for DNA recombination by continuous HJ branch migration. Branch migration allows RuvC to scan DNA until it finds its consensus sequence, where it cleaves and resolves cruciform DNA. The sequence is that of Holliday junction branch migration complex subunit RuvB from Campylobacter fetus subsp. fetus (strain 82-40).